Consider the following 491-residue polypeptide: Galactose-1-phosphate uridylyltransferase 1 (491 aa).

This sequence belongs to the galactose-1-phosphate uridylyltransferase type 2 family.

Its subcellular location is the cytoplasm. It catalyses the reaction alpha-D-galactose 1-phosphate + UDP-alpha-D-glucose = alpha-D-glucose 1-phosphate + UDP-alpha-D-galactose. It participates in carbohydrate metabolism; galactose metabolism. In Streptococcus pneumoniae serotype 4 (strain ATCC BAA-334 / TIGR4), this protein is Galactose-1-phosphate uridylyltransferase 1 (galT1).